A 590-amino-acid polypeptide reads, in one-letter code: Type I inositol polyphosphate 5-phosphatase 1 (590 aa).

The segment at 47–73 is disordered; that stretch reads DYSADSDDDYEDRSQEFDPISSGVTNP. Over residues 48-57 the composition is skewed to acidic residues; sequence YSADSDDDYE. The residue at position 60 (Ser-60) is a Phosphoserine. Catalytic regions lie at residues 445–460 and 523–538; these read ERII…INLS and GKRR…WNGK.

It belongs to the inositol polyphosphate 5-phosphatase family. Expressed ubiquitously.

The catalysed reaction is 1D-myo-inositol 1,4,5-trisphosphate + H2O = 1D-myo-inositol 1,4-bisphosphate + phosphate. The enzyme catalyses 1D-myo-inositol 1,3,4,5-tetrakisphosphate + H2O = 1D-myo-inositol 1,3,4-trisphosphate + phosphate. Has phosphatase activity toward Ins(1,4,5)P3 and Ins(1,3,4,5)P4, but not toward Ins(1,4)P2, Ins(1)P. Seems to be involved in the abscisic acid (ABA) signaling pathway. Could also be able to hydrolyze PtdIns(4,5)P2 and PtdIns(3,4,5)P3. This chain is Type I inositol polyphosphate 5-phosphatase 1, found in Arabidopsis thaliana (Mouse-ear cress).